The primary structure comprises 29 residues: U1-pseudomyrmecitoxin-Pt1 subunit SS1 (29 aa).

This sequence belongs to the myrmexin family. As to quaternary structure, heterodimer composed of subunit SS1 and subunit LS1 (U1-PSDTX-Pt1b), and heterodimer composed of subunit SS1 and LS2 (U1-PSDTX-Pt1a); disulfide-linked. In terms of tissue distribution, expressed by the venom gland.

The protein resides in the secreted. In terms of biological role, this heterodimer may have anti-inflammatory properties, since the myrmexin complex (composed of 6 SS-LS heterodimers) inhibits carrageenin-induced edema in a dose-dependent manner (after subcutaneous injection into rats). This chain is U1-pseudomyrmecitoxin-Pt1 subunit SS1, found in Pseudomyrmex triplarinus (Ant).